Consider the following 299-residue polypeptide: 4-diphosphocytidyl-2-C-methyl-D-erythritol kinase (299 aa).

K11 is an active-site residue. An ATP-binding site is contributed by 94-104 (PQGGGLGGGSS). The active site involves D136.

This sequence belongs to the GHMP kinase family. IspE subfamily.

It catalyses the reaction 4-CDP-2-C-methyl-D-erythritol + ATP = 4-CDP-2-C-methyl-D-erythritol 2-phosphate + ADP + H(+). Its pathway is isoprenoid biosynthesis; isopentenyl diphosphate biosynthesis via DXP pathway; isopentenyl diphosphate from 1-deoxy-D-xylulose 5-phosphate: step 3/6. Functionally, catalyzes the phosphorylation of the position 2 hydroxy group of 4-diphosphocytidyl-2C-methyl-D-erythritol. The protein is 4-diphosphocytidyl-2-C-methyl-D-erythritol kinase of Bordetella pertussis (strain Tohama I / ATCC BAA-589 / NCTC 13251).